The chain runs to 588 residues: Calicin (588 aa).

Residues 28-98 form the BTB domain; sequence WDIALTVDHH…FYSGKVVISE (71 aa). A Phosphoserine modification is found at Ser-149. 6 Kelch repeats span residues 280–327, 328–375, 377–423, 425–475, 476–525, and 526–580; these read SVVI…SAGR, YIYI…TCGG, VYSV…TRGD, NLYI…SFHQ, DNIL…VGDN, and KVFV…LAKL.

In terms of assembly, interacts with CYLC1; the interaction may be relevant for proper acrosome attachment to the nuclear envelope. In terms of tissue distribution, expressed in testis and in spermatozoa (at protein level).

The protein resides in the cytoplasm. It localises to the cytoskeleton. The protein localises to the perinuclear theca. Its subcellular location is the calyx. Required for both nuclear and acrosomal shaping during spermiogenesis. This is Calicin (CCIN) from Bos taurus (Bovine).